The primary structure comprises 151 residues: Methylglyoxal synthase (151 aa).

The MGS-like domain occupies 6–151; that stretch reads RVMPAHKHIA…DYDAYLAERV (146 aa). Residues H19, K23, 45–48, and 65–66 each bind substrate; these read TGTT and SG. D71 functions as the Proton donor/acceptor in the catalytic mechanism. H98 is a substrate binding site.

Belongs to the methylglyoxal synthase family.

The enzyme catalyses dihydroxyacetone phosphate = methylglyoxal + phosphate. In terms of biological role, catalyzes the formation of methylglyoxal from dihydroxyacetone phosphate. In Aliivibrio fischeri (strain MJ11) (Vibrio fischeri), this protein is Methylglyoxal synthase.